A 412-amino-acid chain; its full sequence is [Pyruvate dehydrogenase (acetyl-transferring)] kinase isozyme 4, mitochondrial (412 aa).

One can recognise a Histidine kinase domain in the interval 138-368 (ILEYKDTCTV…DAIIYLKALS (231 aa)). ATP is bound by residues 254-261 (ELFKNAMR), Asp-293, 312-313 (ST), and 329-334 (GFGYGL).

It belongs to the PDK/BCKDK protein kinase family. In terms of assembly, homodimer. Interacts with the pyruvate dehydrogenase complex subunit DLAT, and is part of the multimeric pyruvate dehydrogenase complex that contains multiple copies of pyruvate dehydrogenase (E1), dihydrolipoamide acetyltransferase (DLAT, E2) and lipoamide dehydrogenase (DLD, E3). In terms of tissue distribution, detected in skeletal muscle and heart.

The protein resides in the mitochondrion matrix. It catalyses the reaction L-seryl-[pyruvate dehydrogenase E1 alpha subunit] + ATP = O-phospho-L-seryl-[pyruvate dehydrogenase E1 alpha subunit] + ADP + H(+). In terms of biological role, kinase that plays a key role in regulation of glucose and fatty acid metabolism and homeostasis via phosphorylation of the pyruvate dehydrogenase subunits PDHA1 and PDHA2. This inhibits pyruvate dehydrogenase activity, and thereby regulates metabolite flux through the tricarboxylic acid cycle, down-regulates aerobic respiration and inhibits the formation of acetyl-coenzyme A from pyruvate. Inhibition of pyruvate dehydrogenase decreases glucose utilization and increases fat metabolism in response to prolonged fasting and starvation. Plays an important role in maintaining normal blood glucose levels under starvation, and is involved in the insulin signaling cascade. Via its regulation of pyruvate dehydrogenase activity, plays an important role in maintaining normal blood pH and in preventing the accumulation of ketone bodies under starvation. In the fed state, mediates cellular responses to glucose levels and to a high-fat diet. Regulates both fatty acid oxidation and de novo fatty acid biosynthesis. Plays a role in the generation of reactive oxygen species. Protects detached epithelial cells against anoikis. Plays a role in cell proliferation via its role in regulating carbohydrate and fatty acid metabolism. The chain is [Pyruvate dehydrogenase (acetyl-transferring)] kinase isozyme 4, mitochondrial (PDK4) from Ictidomys tridecemlineatus (Thirteen-lined ground squirrel).